The sequence spans 72 residues: Large ribosomal subunit protein eL40 (72 aa).

The protein belongs to the eukaryotic ribosomal protein eL40 family.

The sequence is that of Large ribosomal subunit protein eL40 from Nicotiana tabacum (Common tobacco).